A 302-amino-acid chain; its full sequence is Zinc transporter ZIP1 (302 aa).

Residues 1-6 lie on the Extracellular side of the membrane; that stretch reads MEYLLQ. The chain crosses the membrane as a helical span at residues 7 to 27; that stretch reads VKIAALVGLLFLTLIFGFIPA. At 28-44 the chain is on the cytoplasmic side; sequence RVKWFRDTDGTETHRTV. The chain crosses the membrane as a helical span at residues 45-65; that stretch reads LSLISCFAGGVFLSACFLDII. Topologically, residues 66–80 are extracellular; the sequence is PDYLSDINTELHARQ. Residues 81–101 form a helical membrane-spanning segment; the sequence is LETSFPLPEFIMAAGFFTVLI. Residues 102–158 lie on the Cytoplasmic side of the membrane; the sequence is LERIVLNCKEMRATHEERTTLIPERKSGHGHGHGDGPDPESSGHHVHVDFQAHSPFR. The segment at 123 to 145 is disordered; that stretch reads IPERKSGHGHGHGDGPDPESSGH. Residues 159–179 form a helical membrane-spanning segment; the sequence is SFMLFLSLSLHSIFEGLAIGL. The Extracellular segment spans residues 180–185; sequence QTTDPK. Residues 186 to 206 form a helical membrane-spanning segment; that stretch reads VVEICIAILVHKSIIVFSLAV. Over 207-216 the chain is Cytoplasmic; the sequence is KLVQSAIPPL. Residues 217-237 form a helical membrane-spanning segment; that stretch reads WVAAYIGVFALMSPVGIAIGI. The Extracellular portion of the chain corresponds to 238–251; it reads SVMEAQLAAGPLIQ. Residues 252 to 272 form a helical membrane-spanning segment; sequence AILEGFAAGTFVYITFLEILP. The Cytoplasmic portion of the chain corresponds to 273–281; the sequence is HELNSPGKQ. A helical membrane pass occupies residues 282 to 302; sequence LLKVLFLLLGFSIMAALSFLG.

This sequence belongs to the ZIP transporter (TC 2.A.5) family. In terms of tissue distribution, highest levels in ovary, lower levels in intestine and gill, barely detected in kidney.

The protein resides in the cell membrane. It localises to the endoplasmic reticulum membrane. It carries out the reaction Zn(2+)(in) = Zn(2+)(out). Its function is as follows. Transporter for the divalent cation Zn(2+). Mediates the influx of Zn(2+) into cells from extracellular space. This is Zinc transporter ZIP1 (slc39a1) from Takifugu rubripes (Japanese pufferfish).